A 353-amino-acid polypeptide reads, in one-letter code: UDP-3-O-acylglucosamine N-acyltransferase (353 aa).

His-246 serves as the catalytic Proton acceptor.

It belongs to the transferase hexapeptide repeat family. LpxD subfamily. In terms of assembly, homotrimer.

It carries out the reaction a UDP-3-O-[(3R)-3-hydroxyacyl]-alpha-D-glucosamine + a (3R)-hydroxyacyl-[ACP] = a UDP-2-N,3-O-bis[(3R)-3-hydroxyacyl]-alpha-D-glucosamine + holo-[ACP] + H(+). The protein operates within bacterial outer membrane biogenesis; LPS lipid A biosynthesis. Its function is as follows. Catalyzes the N-acylation of UDP-3-O-acylglucosamine using 3-hydroxyacyl-ACP as the acyl donor. Is involved in the biosynthesis of lipid A, a phosphorylated glycolipid that anchors the lipopolysaccharide to the outer membrane of the cell. The protein is UDP-3-O-acylglucosamine N-acyltransferase of Chlorobaculum tepidum (strain ATCC 49652 / DSM 12025 / NBRC 103806 / TLS) (Chlorobium tepidum).